Here is a 670-residue protein sequence, read N- to C-terminus: Solute carrier organic anion transporter family member 1A3 (670 aa).

Residues 1-20 (MGDLEKGAATHGAGCFAKIK) lie on the Cytoplasmic side of the membrane. The chain crosses the membrane as a helical span at residues 21 to 40 (VFLMALTCAYVSKSLSGTFM). At 41–59 (SSMLTQIERQFGIPTAIVG) the chain is on the extracellular side. Residues 60–80 (FINGSFEIGNLLLIIFVSYFG) traverse the membrane as a helical segment. Residues 81-86 (MKLHRP) lie on the Cytoplasmic side of the membrane. Residues 87–111 (IVIGVGCAVMGLGCFIISLPHFLMG) form a helical membrane-spanning segment. At 112-155 (RYEYETTILPTSNLSSNSFLCMENQTQTLNPAQDPAECVKEVKS) the chain is on the extracellular side. Asn-124 and Asn-135 each carry an N-linked (GlcNAc...) asparagine glycan. The chain crosses the membrane as a helical span at residues 156–184 (LMWIYVLVGNIIRGIGETPIMPLGVSYIE). Residues 185 to 203 (NFAKSENSPLYIGILETGK) lie on the Cytoplasmic side of the membrane. The helical transmembrane segment at 204–224 (MIGPIFGLLLGSFCASIYVDT) threads the bilayer. At 225-242 (GSVNTDDLTITPTDIRWV) the chain is on the extracellular side. The helical transmembrane segment at 243–267 (GAWWIGFLVCAGVNILISIPFFFFP) threads the bilayer. Topologically, residues 268-311 (KTLPKEGLQENVDGTENAKEESTEKRPRKKNRGITKDFFPFLKS) are cytoplasmic. The tract at residues 277 to 296 (ENVDGTENAKEESTEKRPRK) is disordered. Basic and acidic residues predominate over residues 283-292 (ENAKEESTEK). A helical membrane pass occupies residues 312-333 (PVLQPDLHAVHPYKVLQVNAFN). Residues 334 to 353 (IYFSFLPKYLENQYGKSTAE) are Extracellular-facing. A helical membrane pass occupies residues 354–377 (VIFLMGVYNLPAICIGYLIAGFMM). Over 378-381 (KKFK) the chain is Cytoplasmic. A helical membrane pass occupies residues 382-405 (ITVKTAAFLAFCLSLSEYSFGFCN). The Extracellular segment spans residues 406 to 513 (FLITCDNVPV…PECTNKLQYL (108 aa)). The 56-residue stretch at 433–488 (NNVLADCNTRCSCLTKTWDPVCGDNGLAYMSACLAGCEKSVGTGTNMVFHNCSCIQ) folds into the Kazal-like domain. 3 cysteine pairs are disulfide-bonded: Cys-439–Cys-469, Cys-445–Cys-465, and Cys-454–Cys-486. N-linked (GlcNAc...) asparagine glycosylation is found at Asn-483 and Asn-492. A helical membrane pass occupies residues 514–536 (LILSGFLSILYSFAAIPGYMVFL). The Cytoplasmic portion of the chain corresponds to 537 to 545 (RCIKSEEKS). Residues 546-571 (LGIGIHAFCIRVFAGIPAPIYFGALI) traverse the membrane as a helical segment. Topologically, residues 572–605 (DRTCLHWGTQKCGAPGACRMYDINSFRRIYLGMS) are extracellular. A helical membrane pass occupies residues 606–623 (AALRGSSYLPAFVIVILT). Residues 624–670 (RKFSLPGKINSSEMEIAEMKLTEKESQCTDVHRNPKFKNDGELKTKL) are Cytoplasmic-facing.

This sequence belongs to the organo anion transporter (TC 2.A.60) family. All isoforms are detected in kidney, and many are kidney specific. Isoforms 2 and 13 are also detected in liver. Isoforms 4 and 9/K4 are ubiquitous, but isoform 9/K13 is kidney specific. Isoforms 5 and 14 are detected in all tissues tested, with the exception of pancreas and spleen. Isoforms 11 and 15 are detected in kidney, pancreas and testis. Isoform 7 is detected in kidney, liver, testis and spleen.

It localises to the cell membrane. In terms of biological role, mediates the Na(+)-independent transport of organic anions such as methotrexate, taurocholate, folate and prostaglandin E2. May contribute to renal secretion and/or reabsorption of hydrophobic anionic compounds. Mediates renal clearance of methotrexate from the blood. In Rattus norvegicus (Rat), this protein is Solute carrier organic anion transporter family member 1A3 (Slco1a3).